Consider the following 174-residue polypeptide: RNA pyrophosphohydrolase (174 aa).

The Nudix hydrolase domain occupies 6 to 149 (GYRPNVGIIL…KRDVYLEALK (144 aa)). The Nudix box signature appears at 38-59 (GGIKPGESPETAMYRELYEEVG).

It belongs to the Nudix hydrolase family. RppH subfamily. Requires a divalent metal cation as cofactor.

Functionally, accelerates the degradation of transcripts by removing pyrophosphate from the 5'-end of triphosphorylated RNA, leading to a more labile monophosphorylated state that can stimulate subsequent ribonuclease cleavage. This is RNA pyrophosphohydrolase from Neisseria gonorrhoeae (strain ATCC 700825 / FA 1090).